The primary structure comprises 383 residues: Putative gustatory receptor 22c (383 aa).

Topologically, residues 1–11 are cytoplasmic; sequence MFASRSDLQSR. A helical membrane pass occupies residues 12 to 32; that stretch reads LCWIILKATLYSSWFLGVFPY. Residues 33-45 lie on the Extracellular side of the membrane; that stretch reads RFDSRNGQLKRSR. Residues 46 to 66 form a helical membrane-spanning segment; that stretch reads FLLFYGLILNFFLLLKMVCSG. Over 67–86 the chain is Cytoplasmic; the sequence is GQKLGIPEAFARNSVLENTH. Residues 87–107 form a helical membrane-spanning segment; sequence YTTGMLAVFSCVVIHFLNFWG. At 108 to 144 the chain is on the extracellular side; that stretch reads STRVQDLANELLVLEYQQFASLNETKCPKFNSFVIQK. N130 carries an N-linked (GlcNAc...) asparagine glycan. The helical transmembrane segment at 145 to 165 threads the bilayer; that stretch reads WLSVIGLLLSYLSIAYGLPGN. At 166–250 the chain is on the cytoplasmic side; the sequence is NFSVEMVLIN…YMVATYEYHM (85 aa). The chain crosses the membrane as a helical span at residues 251–271; it reads TLVLTTGLASNFLAIYSWIVL. The Extracellular segment spans residues 272–279; the sequence is DISMNINF. The helical transmembrane segment at 280–300 threads the bilayer; sequence IYLLIFPLFLLVNVWNLWLSI. The Cytoplasmic segment spans residues 301–360; sequence AASDLAENAGKSTQTVLKLFADLEVKDIELERSVNEFALLCGHCQFNFHVCGLFTINYKM. A helical transmembrane segment spans residues 361–381; that stretch reads GFQMIITSFLYLIYMIQFDFM. Residues 382 to 383 lie on the Extracellular side of the membrane; it reads NL.

This sequence belongs to the insect chemoreceptor superfamily. Gustatory receptor (GR) family. Gr22e subfamily. Taste bristles in the foreleg and labial palps.

It localises to the cell membrane. Probable gustatory receptor which mediates acceptance or avoidance behavior, depending on its substrates. The protein is Putative gustatory receptor 22c (Gr22c) of Drosophila melanogaster (Fruit fly).